We begin with the raw amino-acid sequence, 500 residues long: Transcription termination/antitermination protein NusA (500 aa).

The S1 motif domain maps to glycine 135 to serine 205. The KH domain occupies lysine 307 to glutamate 373. 2 consecutive repeat copies span residues aspartate 369 to leucine 419 and glycine 444 to cysteine 494. The segment at aspartate 369 to cysteine 494 is 2 X 51 AA approximate repeats.

The protein belongs to the NusA family. As to quaternary structure, monomer. Binds directly to the core enzyme of the DNA-dependent RNA polymerase and to nascent RNA.

It localises to the cytoplasm. In terms of biological role, participates in both transcription termination and antitermination. The polypeptide is Transcription termination/antitermination protein NusA (Salmonella typhimurium (strain LT2 / SGSC1412 / ATCC 700720)).